Consider the following 269-residue polypeptide: Thiazole synthase (269 aa).

Residue lysine 109 is the Schiff-base intermediate with DXP of the active site. 1-deoxy-D-xylulose 5-phosphate contacts are provided by residues glycine 170, 196-197 (AG), and 218-219 (NT).

The protein belongs to the ThiG family. Homotetramer. Forms heterodimers with either ThiH or ThiS.

It localises to the plastid. Its subcellular location is the chloroplast. The catalysed reaction is [ThiS sulfur-carrier protein]-C-terminal-Gly-aminoethanethioate + 2-iminoacetate + 1-deoxy-D-xylulose 5-phosphate = [ThiS sulfur-carrier protein]-C-terminal Gly-Gly + 2-[(2R,5Z)-2-carboxy-4-methylthiazol-5(2H)-ylidene]ethyl phosphate + 2 H2O + H(+). It functions in the pathway cofactor biosynthesis; thiamine diphosphate biosynthesis. Its function is as follows. Catalyzes the rearrangement of 1-deoxy-D-xylulose 5-phosphate (DXP) to produce the thiazole phosphate moiety of thiamine. Sulfur is provided by the thiocarboxylate moiety of the carrier protein ThiS. In vitro, sulfur can be provided by H(2)S. This Thalassiosira pseudonana (Marine diatom) protein is Thiazole synthase.